A 255-amino-acid chain; its full sequence is Sulfur carrier protein FdhD (255 aa).

The Cysteine persulfide intermediate role is filled by Cys103.

Belongs to the FdhD family.

It localises to the cytoplasm. Its function is as follows. Required for formate dehydrogenase (FDH) activity. Acts as a sulfur carrier protein that transfers sulfur from IscS to the molybdenum cofactor prior to its insertion into FDH. The polypeptide is Sulfur carrier protein FdhD (Sulfurisphaera tokodaii (strain DSM 16993 / JCM 10545 / NBRC 100140 / 7) (Sulfolobus tokodaii)).